A 286-amino-acid polypeptide reads, in one-letter code: Light-independent protochlorophyllide reductase iron-sulfur ATP-binding protein (286 aa).

Residues Gly10–Thr15 and Lys39 contribute to the ATP site. Ser14 is a binding site for Mg(2+). Positions 95 and 129 each coordinate [4Fe-4S] cluster. Asn180–Arg181 provides a ligand contact to ATP.

This sequence belongs to the NifH/BchL/ChlL family. As to quaternary structure, homodimer. Protochlorophyllide reductase is composed of three subunits; ChlL, ChlN and ChlB. It depends on [4Fe-4S] cluster as a cofactor.

It carries out the reaction chlorophyllide a + oxidized 2[4Fe-4S]-[ferredoxin] + 2 ADP + 2 phosphate = protochlorophyllide a + reduced 2[4Fe-4S]-[ferredoxin] + 2 ATP + 2 H2O. Its pathway is porphyrin-containing compound metabolism; chlorophyll biosynthesis (light-independent). Functionally, component of the dark-operative protochlorophyllide reductase (DPOR) that uses Mg-ATP and reduced ferredoxin to reduce ring D of protochlorophyllide (Pchlide) to form chlorophyllide a (Chlide). This reaction is light-independent. The L component serves as a unique electron donor to the NB-component of the complex, and binds Mg-ATP. The polypeptide is Light-independent protochlorophyllide reductase iron-sulfur ATP-binding protein (Cyanothece sp. (strain PCC 7425 / ATCC 29141)).